The sequence spans 439 residues: Serine/threonine-protein kinase 2 (439 aa).

The region spanning 87 to 439 (NDDFYHISTG…IFSDWINGGN (353 aa)) is the Protein kinase domain. ATP is bound by residues 93–101 (ISTGGYGIV) and Lys117. Asp307 (proton acceptor) is an active-site residue.

This sequence belongs to the protein kinase superfamily. Ser/Thr protein kinase family. Post-translationally, phosphorylated in vivo. Autophosphorylated in vitro.

The protein localises to the host endoplasmic reticulum. It is found in the host endoplasmic reticulum-Golgi intermediate compartment. It carries out the reaction L-seryl-[protein] + ATP = O-phospho-L-seryl-[protein] + ADP + H(+). The catalysed reaction is L-threonyl-[protein] + ATP = O-phospho-L-threonyl-[protein] + ADP + H(+). In terms of biological role, essential serine-protein kinase involved in the early stage of virion morphogenesis. In Bos taurus (Bovine), this protein is Serine/threonine-protein kinase 2 (OPG054).